Consider the following 417-residue polypeptide: Exodeoxyribonuclease 7 large subunit (417 aa).

It belongs to the XseA family. As to quaternary structure, heterooligomer composed of large and small subunits.

It localises to the cytoplasm. The catalysed reaction is Exonucleolytic cleavage in either 5'- to 3'- or 3'- to 5'-direction to yield nucleoside 5'-phosphates.. In terms of biological role, bidirectionally degrades single-stranded DNA into large acid-insoluble oligonucleotides, which are then degraded further into small acid-soluble oligonucleotides. The chain is Exodeoxyribonuclease 7 large subunit from Corynebacterium glutamicum (strain ATCC 13032 / DSM 20300 / JCM 1318 / BCRC 11384 / CCUG 27702 / LMG 3730 / NBRC 12168 / NCIMB 10025 / NRRL B-2784 / 534).